We begin with the raw amino-acid sequence, 1791 residues long: 1-phosphatidylinositol-3-phosphate 5-kinase FAB1B (1791 aa).

The segment at 39–105 (DQSCRVCYEC…VCNYCFRQWE (67 aa)) adopts an FYVE-type zinc-finger fold. The Zn(2+) site is built by cysteine 45, cysteine 48, cysteine 61, cysteine 64, cysteine 69, cysteine 72, cysteine 97, and cysteine 100. Disordered regions lie at residues 166–186 (HGVS…SRRS), 279–370 (EQFQ…DRTT), 770–790 (SDLS…NPIV), and 834–859 (QQNN…DHQS). Positions 279 to 293 (EQFQKKSEHDGRDEC) are enriched in basic and acidic residues. Residues 324-345 (PENEEDERESALFDEEDNEGDA) show a composition bias toward acidic residues. Over residues 838-850 (EKPKETQSQKEEF) the composition is skewed to basic and acidic residues. The stretch at 1077-1111 (EKGFRRRIGELEEVLQKEKAEFEENMQKILHREVN) forms a coiled coil. The segment covering 1151–1164 (NSDDTKREENEKPP) has biased composition (basic and acidic residues). Residues 1151 to 1242 (NSDDTKREEN…DTSYPLENKV (92 aa)) are disordered. 2 stretches are compositionally biased toward polar residues: residues 1167 to 1188 (KSQT…SEVN) and 1196 to 1206 (TGDTGSLNNVQ). The PIPK domain maps to 1433-1758 (SELNIPRPVD…RFRKAMTTYF (326 aa)). The disordered stretch occupies residues 1769-1791 (NVVANNSKSDQPEETSQAGTQAE). The segment covering 1771-1791 (VANNSKSDQPEETSQAGTQAE) has biased composition (polar residues).

Component of the PI(3,5)P2 regulatory complex at least composed of ATG18, SAC/FIG4, FAB1 and VAC14. Mg(2+) is required as a cofactor. It depends on Mn(2+) as a cofactor. As to expression, ubiquitous with highest expression levels in the root hair zone, pollen, and stamens.

The protein localises to the endosome membrane. The enzyme catalyses a 1,2-diacyl-sn-glycero-3-phospho-(1D-myo-inositol-3-phosphate) + ATP = a 1,2-diacyl-sn-glycero-3-phospho-(1D-myo-inositol-3,5-bisphosphate) + ADP + H(+). Functionally, the PI(3,5)P2 regulatory complex regulates both the synthesis and turnover of phosphatidylinositol 3,5-bisphosphate (PtdIns(3,5)P2). Catalyzes the phosphorylation of phosphatidylinositol 3-phosphate on the fifth hydroxyl of the myo-inositol ring, to form phosphatidylinositol 3,5-bisphosphate. Plays an important role in maintenance of endomembrane homeostasis including endocytosis, vacuole formation, and vacuolar acidification processes. Required for development of viable pollen. Might mediate recycling of auxin transporters. This Arabidopsis thaliana (Mouse-ear cress) protein is 1-phosphatidylinositol-3-phosphate 5-kinase FAB1B (FAB1B).